The following is a 136-amino-acid chain: Ribonuclease P protein component (136 aa).

Belongs to the RnpA family. In terms of assembly, consists of a catalytic RNA component (M1 or rnpB) and a protein subunit.

It carries out the reaction Endonucleolytic cleavage of RNA, removing 5'-extranucleotides from tRNA precursor.. RNaseP catalyzes the removal of the 5'-leader sequence from pre-tRNA to produce the mature 5'-terminus. It can also cleave other RNA substrates such as 4.5S RNA. The protein component plays an auxiliary but essential role in vivo by binding to the 5'-leader sequence and broadening the substrate specificity of the ribozyme. The sequence is that of Ribonuclease P protein component from Arthrobacter sp. (strain FB24).